We begin with the raw amino-acid sequence, 311 residues long: 4-hydroxy-3-methylbut-2-enyl diphosphate reductase (311 aa).

Cys-14 contributes to the [4Fe-4S] cluster binding site. 2 residues coordinate (2E)-4-hydroxy-3-methylbut-2-enyl diphosphate: His-43 and His-76. 2 residues coordinate dimethylallyl diphosphate: His-43 and His-76. The isopentenyl diphosphate site is built by His-43 and His-76. Cys-98 provides a ligand contact to [4Fe-4S] cluster. His-126 lines the (2E)-4-hydroxy-3-methylbut-2-enyl diphosphate pocket. Dimethylallyl diphosphate is bound at residue His-126. His-126 contributes to the isopentenyl diphosphate binding site. The Proton donor role is filled by Glu-128. Residue Thr-166 coordinates (2E)-4-hydroxy-3-methylbut-2-enyl diphosphate. A [4Fe-4S] cluster-binding site is contributed by Cys-196. Residues Ser-224, Ser-225, Asn-226, and Ser-268 each coordinate (2E)-4-hydroxy-3-methylbut-2-enyl diphosphate. Ser-224, Ser-225, Asn-226, and Ser-268 together coordinate dimethylallyl diphosphate. Isopentenyl diphosphate-binding residues include Ser-224, Ser-225, Asn-226, and Ser-268.

Belongs to the IspH family. [4Fe-4S] cluster serves as cofactor.

The enzyme catalyses isopentenyl diphosphate + 2 oxidized [2Fe-2S]-[ferredoxin] + H2O = (2E)-4-hydroxy-3-methylbut-2-enyl diphosphate + 2 reduced [2Fe-2S]-[ferredoxin] + 2 H(+). The catalysed reaction is dimethylallyl diphosphate + 2 oxidized [2Fe-2S]-[ferredoxin] + H2O = (2E)-4-hydroxy-3-methylbut-2-enyl diphosphate + 2 reduced [2Fe-2S]-[ferredoxin] + 2 H(+). It functions in the pathway isoprenoid biosynthesis; dimethylallyl diphosphate biosynthesis; dimethylallyl diphosphate from (2E)-4-hydroxy-3-methylbutenyl diphosphate: step 1/1. Its pathway is isoprenoid biosynthesis; isopentenyl diphosphate biosynthesis via DXP pathway; isopentenyl diphosphate from 1-deoxy-D-xylulose 5-phosphate: step 6/6. Catalyzes the conversion of 1-hydroxy-2-methyl-2-(E)-butenyl 4-diphosphate (HMBPP) into a mixture of isopentenyl diphosphate (IPP) and dimethylallyl diphosphate (DMAPP). Acts in the terminal step of the DOXP/MEP pathway for isoprenoid precursor biosynthesis. This chain is 4-hydroxy-3-methylbut-2-enyl diphosphate reductase, found in Chromobacterium violaceum (strain ATCC 12472 / DSM 30191 / JCM 1249 / CCUG 213 / NBRC 12614 / NCIMB 9131 / NCTC 9757 / MK).